We begin with the raw amino-acid sequence, 399 residues long: Tyrosine--tRNA ligase (399 aa).

The 'HIGH' region signature appears at 42-51 (PTAPDLHLGH). Positions 226–230 (KMSKS) match the 'KMSKS' region motif. An ATP-binding site is contributed by lysine 229. The 61-residue stretch at 336–396 (MPIAAVLNKA…GRKAFARITL (61 aa)) folds into the S4 RNA-binding domain.

This sequence belongs to the class-I aminoacyl-tRNA synthetase family. TyrS type 2 subfamily. As to quaternary structure, homodimer.

The protein resides in the cytoplasm. The catalysed reaction is tRNA(Tyr) + L-tyrosine + ATP = L-tyrosyl-tRNA(Tyr) + AMP + diphosphate + H(+). In terms of biological role, catalyzes the attachment of tyrosine to tRNA(Tyr) in a two-step reaction: tyrosine is first activated by ATP to form Tyr-AMP and then transferred to the acceptor end of tRNA(Tyr). The sequence is that of Tyrosine--tRNA ligase from Pseudomonas fluorescens (strain ATCC BAA-477 / NRRL B-23932 / Pf-5).